The following is a 591-amino-acid chain: V-type ATP synthase alpha chain (591 aa).

242 to 249 (GPFGAGKT) lines the ATP pocket.

The protein belongs to the ATPase alpha/beta chains family.

The enzyme catalyses ATP + H2O + 4 H(+)(in) = ADP + phosphate + 5 H(+)(out). In terms of biological role, produces ATP from ADP in the presence of a proton gradient across the membrane. The V-type alpha chain is a catalytic subunit. The sequence is that of V-type ATP synthase alpha chain from Chlamydia trachomatis serovar A (strain ATCC VR-571B / DSM 19440 / HAR-13).